We begin with the raw amino-acid sequence, 638 residues long: MYQWLAQSLGNVSVNRKLGLGFGLVLLLTLAITLTGWHGMDSIIDRGDKLGNISVIQQYTQELRIARQQYDRRRDDASLAELEKALSNLDRQVQLMLGQIEQPADHQRLEQQREAVRIYQQAFNELKQADQRREASRDVLGSSADKAVDLIGRVQRSLLQGANINQYQHAVDVSALLQQARFQVRGYTYSGNADYQQTALKAIDQALAELRALPAKVPAEHAASLDDAATAMGGYRDAVTQFGNAQLASEQALQRMVEQGTVLLQASQMMTASQTEVRDAAAAQAKTLLTVATVLALALGLLAAWAITRQIIIPLRQTLRAAERVASGDLTQSLQVQRRDELGQLQASMHRMTQGLRELIGGIGDGVTQIASAAEELSAVTEQTSAGVNNQKVETDQVATAMNQMTATVHEVARNAEQASEAALMADQQAREGDRVVGEAVAQIERLASEVVNSSEAMNLLKTESDKIGSVLDVIKSVAQQTNLLALNAAIEAARAGEAGRGFAVVADEVRSLAQRTQQSTEEIEELIAGLQSGTQRVASVMDNSRQLTDSSVELTRRAGSSLETITRTVSSIQAMNQQIATAAEEQTAVAEEINRSVMNVRDISDQTSAASEETASSSVELARLGTHLQGLVGRFRL.

A helical membrane pass occupies residues 18 to 38; the sequence is LGLGFGLVLLLTLAITLTGWH. In terms of domain architecture, HBM spans 45-282; that stretch reads DRGDKLGNIS…SQTEVRDAAA (238 aa). A helical transmembrane segment spans residues 287 to 307; it reads TLLTVATVLALALGLLAAWAI. The 53-residue stretch at 309-361 folds into the HAMP domain; sequence RQIIIPLRQTLRAAERVASGDLTQSLQVQRRDELGQLQASMHRMTQGLRELIG. The region spanning 366–602 is the Methyl-accepting transducer domain; that stretch reads GVTQIASAAE…EINRSVMNVR (237 aa).

This sequence belongs to the methyl-accepting chemotaxis (MCP) protein family.

Its subcellular location is the cell membrane. In terms of biological role, chemotactic-signal transducers respond to changes in the concentration of attractants and repellents in the environment, transduce a signal from the outside to the inside of the cell, and facilitate sensory adaptation through the variation of the level of methylation. McpQ recognizes specifically citrate and citrate/metal(2+) complexes. Binds citrate/metal(2+) complexes with higher affinity than free citrate, and mediates preferentially chemotaxis toward citrate/metal(2+) complexes. The sequence is that of Methyl-accepting chemotaxis protein McpQ from Pseudomonas putida (strain ATCC 47054 / DSM 6125 / CFBP 8728 / NCIMB 11950 / KT2440).